Here is a 748-residue protein sequence, read N- to C-terminus: Peroxisomal membrane protein PEX14 (748 aa).

Disordered regions lie at residues 1–138 (MDND…LSPS) and 190–228 (GNIN…NNNN). The Peroxisomal segment spans residues 1–277 (MDNDDINNNN…IAQLMMNNNR (277 aa)). Residues 7–30 (NNNNNNNNNNNNNNNSQELDQQEQ) show a composition bias toward low complexity. Positions 8-60 (NNNNNNNNNNNNNNSQELDQQEQTQEEITKQRIQKRKEEAKRIMEERKKREQQ) form a coiled coil. A compositionally biased stretch (basic and acidic residues) spans 43–59 (RKEEAKRIMEERKKREQ). Over residues 86–104 (PQRQQQYDDNDEPPQQQQY) the composition is skewed to polar residues. Low complexity-rich tracts occupy residues 122 to 131 (TTSSTASAAT), 190 to 209 (GNIN…NSIS), and 218 to 228 (NNNNNSSNNNN). Residues 241-277 (QQHQQQQQMALTQIQSYQKRLEADDQRIAQLMMNNNR) are a coiled coil. Residues 278–300 (FSWNSFLFSVTAIVGAASGLAYL) form a helical membrane-spanning segment. Residues 301-748 (TSNYIIPFLN…INNTDSSVEK (448 aa)) are Cytoplasmic-facing. Residues 316-413 (KDASANMDKK…IGNKENSNNS (98 aa)) are a coiled coil. Disordered stretches follow at residues 406-673 (NKEN…ETPY) and 685-748 (KQGK…SVEK). 2 stretches are compositionally biased toward low complexity: residues 409–424 (NSNN…NNNN) and 445–476 (STNN…PGSN). Residues 510 to 527 (SWQQKSSNPPSDLSNAND) show a composition bias toward polar residues. 2 stretches are compositionally biased toward low complexity: residues 528–542 (KSSP…PTKP) and 569–611 (TTTT…NNNN). Positions 612 to 627 (TTIASTSNESNNSKVE) are enriched in polar residues. Residues 628-661 (TTSNDSDKSTSPSSSSNNTTSTTATTTTITSAST) show a composition bias toward low complexity. Over residues 710 to 723 (SAKERPKKPWERDT) the composition is skewed to basic and acidic residues. The segment covering 724–748 (LTSVTNNLSVEETQTINNTDSSVEK) has biased composition (polar residues).

Belongs to the peroxin-14 family. As to quaternary structure, interacts with PEX13; forming the PEX13-PEX14 docking complex. Interacts with PEX5 (via WxxxF/Y motifs).

It is found in the peroxisome membrane. In terms of biological role, component of the PEX13-PEX14 docking complex, a translocon channel that specifically mediates the import of peroxisomal cargo proteins bound to PEX5 receptor. The PEX13-PEX14 docking complex forms a large import pore which can be opened to a diameter of about 9 nm. Mechanistically, PEX5 receptor along with cargo proteins associates with the PEX14 subunit of the PEX13-PEX14 docking complex in the cytosol, leading to the insertion of the receptor into the organelle membrane with the concomitant translocation of the cargo into the peroxisome matrix. This Dictyostelium discoideum (Social amoeba) protein is Peroxisomal membrane protein PEX14 (pex14).